The following is a 493-amino-acid chain: Ectonucleoside triphosphate diphosphohydrolase 8 (493 aa).

The Cytoplasmic segment spans residues 1–7 (MEYKGKV). Residues 8–28 (VAGLLTATCVFSIIALILSAV) traverse the membrane as a helical segment. Over 29 to 463 (DVKDVFLPPG…ALEHVKGHEP (435 aa)) the chain is Extracellular. 3 N-linked (GlcNAc...) asparagine glycosylation sites follow: asparagine 65, asparagine 79, and asparagine 133. A disulfide bond links cysteine 76 and cysteine 100. Glutamate 166 acts as the Proton acceptor in catalysis. N-linked (GlcNAc...) asparagine glycosylation is found at asparagine 223, asparagine 234, asparagine 267, asparagine 324, asparagine 330, asparagine 361, asparagine 372, asparagine 382, and asparagine 445. Residues cysteine 244 and cysteine 291 are joined by a disulfide bond. A disulfide bridge connects residues cysteine 327 and cysteine 333. Cysteine 379 and cysteine 401 form a disulfide bridge. A helical transmembrane segment spans residues 464 to 486 (SLWAGAISFIVLAIVAGLVAILL). The Cytoplasmic portion of the chain corresponds to 487 to 493 (QCFWKSK).

The protein belongs to the GDA1/CD39 NTPase family. Requires Ca(2+) as cofactor. It depends on Mg(2+) as a cofactor. Post-translationally, N-glycosylated.

The protein resides in the cell membrane. It carries out the reaction a ribonucleoside 5'-triphosphate + 2 H2O = a ribonucleoside 5'-phosphate + 2 phosphate + 2 H(+). Its function is as follows. Canalicular ectonucleoside NTPDase responsible for the main hepatic NTPDase activity. Ectonucleoside ATPases catalyze the hydrolysis of gamma- and beta-phosphate residues of nucleotides, playing a central role in concentration of extracellular nucleotides. The polypeptide is Ectonucleoside triphosphate diphosphohydrolase 8 (ENTPD8) (Gallus gallus (Chicken)).